We begin with the raw amino-acid sequence, 394 residues long: Elongation factor Tu 2 (394 aa).

The region spanning 10 to 204 is the tr-type G domain; it reads KPHVNVGTIG…ALDSYIPEPE (195 aa). The tract at residues 19-26 is G1; sequence GHVDHGKT. Residue 19–26 coordinates GTP; it reads GHVDHGKT. Mg(2+) is bound at residue threonine 26. The tract at residues 60–64 is G2; sequence GITIS. The G3 stretch occupies residues 81–84; it reads DCPG. Residues 81–85 and 136–139 each bind GTP; these read DCPGH and NKCD. Positions 136–139 are G4; sequence NKCD. The G5 stretch occupies residues 174-176; the sequence is SAL.

Belongs to the TRAFAC class translation factor GTPase superfamily. Classic translation factor GTPase family. EF-Tu/EF-1A subfamily. As to quaternary structure, monomer.

It localises to the cytoplasm. It catalyses the reaction GTP + H2O = GDP + phosphate + H(+). Functionally, GTP hydrolase that promotes the GTP-dependent binding of aminoacyl-tRNA to the A-site of ribosomes during protein biosynthesis. This Pseudoalteromonas translucida (strain TAC 125) protein is Elongation factor Tu 2.